We begin with the raw amino-acid sequence, 365 residues long: tRNA 2-selenouridine synthase (365 aa).

The Rhodanese domain maps to 15 to 138; that stretch reads FIAGQPLIDL…MRQYLIGVIE (124 aa). C98 functions as the S-selanylcysteine intermediate in the catalytic mechanism.

The protein belongs to the SelU family. In terms of assembly, monomer.

The enzyme catalyses 5-methylaminomethyl-2-thiouridine(34) in tRNA + selenophosphate + (2E)-geranyl diphosphate + H2O + H(+) = 5-methylaminomethyl-2-selenouridine(34) in tRNA + (2E)-thiogeraniol + phosphate + diphosphate. It catalyses the reaction 5-methylaminomethyl-2-thiouridine(34) in tRNA + (2E)-geranyl diphosphate = 5-methylaminomethyl-S-(2E)-geranyl-thiouridine(34) in tRNA + diphosphate. The catalysed reaction is 5-methylaminomethyl-S-(2E)-geranyl-thiouridine(34) in tRNA + selenophosphate + H(+) = 5-methylaminomethyl-2-(Se-phospho)selenouridine(34) in tRNA + (2E)-thiogeraniol. It carries out the reaction 5-methylaminomethyl-2-(Se-phospho)selenouridine(34) in tRNA + H2O = 5-methylaminomethyl-2-selenouridine(34) in tRNA + phosphate. Involved in the post-transcriptional modification of the uridine at the wobble position (U34) of tRNA(Lys), tRNA(Glu) and tRNA(Gln). Catalyzes the conversion of 2-thiouridine (S2U-RNA) to 2-selenouridine (Se2U-RNA). Acts in a two-step process involving geranylation of 2-thiouridine (S2U) to S-geranyl-2-thiouridine (geS2U) and subsequent selenation of the latter derivative to 2-selenouridine (Se2U) in the tRNA chain. The polypeptide is tRNA 2-selenouridine synthase (Shewanella sp. (strain ANA-3)).